The sequence spans 253 residues: Tetraspanin-3 (253 aa).

The Cytoplasmic portion of the chain corresponds to 1 to 11 (MGQCGITSSKT). The helical transmembrane segment at 12–32 (VLVFLNLIFWGAAGILCYVGA) threads the bilayer. Residues 33 to 50 (YVFITYDDYDHFFEDVYT) are Extracellular-facing. Residues 51–71 (LIPAVVIIAVGALLFIIGLIG) traverse the membrane as a helical segment. At 72–85 (CCATIRESRCGLAT) the chain is on the cytoplasmic side. Residues 86-106 (FVIILLLVFVTEVVVVVLGYV) traverse the membrane as a helical segment. Residues 107 to 212 (YRAKVENEVD…KKLQEIMMHV (106 aa)) are Extracellular-facing. N-linked (GlcNAc...) asparagine glycosylation is found at asparagine 127, asparagine 152, asparagine 167, and asparagine 183. Residues 213-233 (IWAALAFAAIQLLGMLCACIV) form a helical membrane-spanning segment. Residues 234 to 253 (LCRRSRDPAYELLITGGAYA) lie on the Cytoplasmic side of the membrane.

This sequence belongs to the tetraspanin (TM4SF) family. As to quaternary structure, interacts with claudin-11/CLDN11 and integrins.

The protein resides in the membrane. Functionally, regulates the proliferation and migration of oligodendrocytes, a process essential for normal myelination and repair. This is Tetraspanin-3 (TSPAN3) from Bos taurus (Bovine).